The primary structure comprises 301 residues: Probable alpha-L-glutamate ligase (301 aa).

The region spanning 104–287 is the ATP-grasp domain; sequence LQLLSRKGVG…VAALVMEFIE (184 aa). Residues K141, 178–179, D187, and 211–213 contribute to the ATP site; these read EY and RSN. Mg(2+)-binding residues include D248, E260, and N262. 3 residues coordinate Mn(2+): D248, E260, and N262.

The protein belongs to the RimK family. Mg(2+) is required as a cofactor. It depends on Mn(2+) as a cofactor.

The polypeptide is Probable alpha-L-glutamate ligase (Saccharophagus degradans (strain 2-40 / ATCC 43961 / DSM 17024)).